A 204-amino-acid chain; its full sequence is Guanylate kinase (204 aa).

The 180-residue stretch at 5–184 (GLLIVLSGPS…AVQRIKDIIA (180 aa)) folds into the Guanylate kinase-like domain. 12–19 (GPSGVGKG) is an ATP binding site.

Belongs to the guanylate kinase family.

The protein localises to the cytoplasm. The catalysed reaction is GMP + ATP = GDP + ADP. Essential for recycling GMP and indirectly, cGMP. The sequence is that of Guanylate kinase from Enterococcus faecalis (strain ATCC 700802 / V583).